The following is a 342-amino-acid chain: MKRAFSSQLRSAYPASKSTHFGRVMASSGSEAKANYAPISTNEPVVSVDWLHSNLGDADIKVLDASWYMAHEQRNPIQEYQVAHIPGALFFDLNGIADRKTNLRHMLPSEEAFAAGCSALGIENNDGVVVYDGMGLFSAARVWWMFRVFGHDKVWVLDGGLPKWRASGYDVESSVSNDAILKASAATEAIEKIYQGQTISPITFQTKFRPHLVLALDQVKENIEDKTYQHIDARSKARFDGIAPEPWKGLPSGHIPGSKCVPFPLMFDSSQTLLPAEELKKQFEQEDISLDSPIAASCGTGVTACILALGLYRLGKTNVAIYDGSWTEWATAPNLPIVGSSS.

Rhodanese domains follow at residues 56–173 (GDAD…DVES) and 224–338 (EDKT…LPIV). Catalysis depends on C298, which acts as the Cysteine persulfide intermediate.

In terms of tissue distribution, expressed in roots, rosette and cauline leaves, stems, flowers and siliques.

Its subcellular location is the cytoplasm. The catalysed reaction is thiosulfate + hydrogen cyanide = thiocyanate + sulfite + 2 H(+). It carries out the reaction 2-oxo-3-sulfanylpropanoate + [thioredoxin]-dithiol = [thioredoxin]-disulfide + hydrogen sulfide + pyruvate + H(+). In terms of biological role, catalyzes the transfer of a sulfur ion from a donor to cyanide or to other thiol compounds. Substrate preference is 3-mercaptopyruvate &gt; thiosulfate. Involved in embryo and seed development. This is Thiosulfate/3-mercaptopyruvate sulfurtransferase 2 (STR2) from Arabidopsis thaliana (Mouse-ear cress).